The primary structure comprises 420 residues: Exodeoxyribonuclease 7 large subunit (420 aa).

Belongs to the XseA family. As to quaternary structure, heterooligomer composed of large and small subunits.

Its subcellular location is the cytoplasm. The catalysed reaction is Exonucleolytic cleavage in either 5'- to 3'- or 3'- to 5'-direction to yield nucleoside 5'-phosphates.. Its function is as follows. Bidirectionally degrades single-stranded DNA into large acid-insoluble oligonucleotides, which are then degraded further into small acid-soluble oligonucleotides. This Helicobacter pylori (strain J99 / ATCC 700824) (Campylobacter pylori J99) protein is Exodeoxyribonuclease 7 large subunit.